We begin with the raw amino-acid sequence, 129 residues long: Follitropin subunit beta (129 aa).

The signal sequence occupies residues 1–18 (MKTLQFFFLFCCWKAICC). 6 disulfides stabilise this stretch: cysteine 21–cysteine 69, cysteine 35–cysteine 84, cysteine 38–cysteine 122, cysteine 46–cysteine 100, cysteine 50–cysteine 102, and cysteine 105–cysteine 112. Asparagine 25 and asparagine 42 each carry an N-linked (GlcNAc...) asparagine glycan.

The protein belongs to the glycoprotein hormones subunit beta family. As to quaternary structure, heterodimer. The active follitropin is a heterodimer composed of an alpha chain/CGA shared with other hormones and a unique beta chain/FSHB shown here.

The protein resides in the secreted. In terms of biological role, together with the alpha chain CGA constitutes follitropin, the follicle-stimulating hormone, and provides its biological specificity to the hormone heterodimer. Binds FSHR, a G protein-coupled receptor, on target cells to activate downstream signaling pathways. Follitropin is involved in follicle development and spermatogenesis in reproductive organs. The protein is Follitropin subunit beta (FSHB) of Homo sapiens (Human).